We begin with the raw amino-acid sequence, 499 residues long: Tektin-like protein 1 (499 aa).

Phosphoserine is present on serine 14. Residues tryptophan 201 to lysine 225 are a coiled coil. The disordered stretch occupies residues valine 265–isoleucine 286. Residues lysine 308 to isoleucine 328 are a coiled coil. Tyrosine 372 is subject to Phosphotyrosine.

As to quaternary structure, microtubule inner protein component of sperm flagellar doublet microtubules.

The protein localises to the cytoplasm. Its subcellular location is the cytoskeleton. The protein resides in the flagellum axoneme. Its function is as follows. Microtubule inner protein (MIP) part of the dynein-decorated doublet microtubules (DMTs) in sperm flagellar axoneme, which is required for motile flagellum beating. Forms an extensive interaction network cross-linking the lumen of axonemal doublet microtubules. In Mus musculus (Mouse), this protein is Tektin-like protein 1.